Consider the following 31-residue polypeptide: Branched-chain-amino-acid aminotransferase, mitochondrial (31 aa).

A mitochondrion-targeting transit peptide spans 1–27 (MAAAALRQIWARKFLPVPWLLCGPRRY).

This sequence belongs to the class-IV pyridoxal-phosphate-dependent aminotransferase family. As to quaternary structure, homodimer. Requires pyridoxal 5'-phosphate as cofactor.

Its subcellular location is the mitochondrion. It catalyses the reaction L-leucine + 2-oxoglutarate = 4-methyl-2-oxopentanoate + L-glutamate. The enzyme catalyses L-isoleucine + 2-oxoglutarate = (S)-3-methyl-2-oxopentanoate + L-glutamate. It carries out the reaction L-valine + 2-oxoglutarate = 3-methyl-2-oxobutanoate + L-glutamate. Catalyzes the first reaction in the catabolism of the essential branched chain amino acids leucine, isoleucine, and valine. May also function as a transporter of branched chain alpha-keto acids. This is Branched-chain-amino-acid aminotransferase, mitochondrial (BCAT2) from Sus scrofa (Pig).